We begin with the raw amino-acid sequence, 816 residues long: uncharacterized protein (816 aa).

Disordered regions lie at residues 1–81 (MDVV…NSNN) and 391–411 (LGSN…NNDF). Low complexity predominate over residues 28–44 (EVPPQRPRQQNRWKPWW). Residues 64–81 (QGRSSPTTDFQDSVNSNN) are compositionally biased toward polar residues. Phosphoserine is present on residues Ser76 and Ser79. Low complexity predominate over residues 391–400 (LGSNSSTNEN).

This is an uncharacterized protein from Saccharomyces cerevisiae (strain ATCC 204508 / S288c) (Baker's yeast).